The following is a 258-amino-acid chain: Imidazole glycerol phosphate synthase subunit HisF (258 aa).

Catalysis depends on residues Asp-11 and Asp-130.

It belongs to the HisA/HisF family. Heterodimer of HisH and HisF.

The protein resides in the cytoplasm. The catalysed reaction is 5-[(5-phospho-1-deoxy-D-ribulos-1-ylimino)methylamino]-1-(5-phospho-beta-D-ribosyl)imidazole-4-carboxamide + L-glutamine = D-erythro-1-(imidazol-4-yl)glycerol 3-phosphate + 5-amino-1-(5-phospho-beta-D-ribosyl)imidazole-4-carboxamide + L-glutamate + H(+). It participates in amino-acid biosynthesis; L-histidine biosynthesis; L-histidine from 5-phospho-alpha-D-ribose 1-diphosphate: step 5/9. Its function is as follows. IGPS catalyzes the conversion of PRFAR and glutamine to IGP, AICAR and glutamate. The HisF subunit catalyzes the cyclization activity that produces IGP and AICAR from PRFAR using the ammonia provided by the HisH subunit. This Stenotrophomonas maltophilia (strain K279a) protein is Imidazole glycerol phosphate synthase subunit HisF.